We begin with the raw amino-acid sequence, 371 residues long: Cytochrome b (371 aa).

4 helical membrane-spanning segments follow: residues 25-45 (FGSMLLACSSMQVLTGFFLAV), 69-90 (WLMQNLHAIGASMFFICIYTHI), 105-125 (WLSGTTLLIMLMATAFFGYVL), and 170-190 (FFALHFILPFGIISLSSLHIM). 2 residues coordinate heme b: His-75 and His-89. 2 residues coordinate heme b: His-174 and His-188. A ubiquinone is bound at residue His-193. 4 helical membrane passes run 218 to 238 (YKDMLMLSLMVLALLTTVAFF), 280 to 300 (LGGALALVMSIMILLTTPFTH), 312 to 332 (IMQFMFWTLVATFTVITWAAT), and 339 to 358 (FTAISQAASTMYFMFFITNP).

Belongs to the cytochrome b family. In terms of assembly, the cytochrome bc1 complex contains 3 respiratory subunits (MT-CYB, CYC1 and UQCRFS1), 2 core proteins (UQCRC1 and UQCRC2) and probably 6 low-molecular weight proteins. Requires heme b as cofactor.

Its subcellular location is the mitochondrion inner membrane. Its function is as follows. Component of the ubiquinol-cytochrome c reductase complex (complex III or cytochrome b-c1 complex) that is part of the mitochondrial respiratory chain. The b-c1 complex mediates electron transfer from ubiquinol to cytochrome c. Contributes to the generation of a proton gradient across the mitochondrial membrane that is then used for ATP synthesis. The polypeptide is Cytochrome b (MT-CYB) (Eryx colubrinus loveridgei).